Consider the following 367-residue polypeptide: Molybdenum import ATP-binding protein ModC (367 aa).

An ABC transporter domain is found at 1 to 234; sequence MSSAALEVRL…PALSGGFGHE (234 aa). Residue 33–40 participates in ATP binding; sequence GPSGAGKS. One can recognise a Mop domain in the interval 293 to 366; sequence HISLHNILPV…IKSVAVDVLG (74 aa).

This sequence belongs to the ABC transporter superfamily. Molybdate importer (TC 3.A.1.8) family. In terms of assembly, the complex is composed of two ATP-binding proteins (ModC), two transmembrane proteins (ModB) and a solute-binding protein (ModA).

It localises to the cell inner membrane. It catalyses the reaction molybdate(out) + ATP + H2O = molybdate(in) + ADP + phosphate + H(+). In terms of biological role, part of the ABC transporter complex ModABC involved in molybdenum import. Responsible for energy coupling to the transport system. The chain is Molybdenum import ATP-binding protein ModC from Granulibacter bethesdensis (strain ATCC BAA-1260 / CGDNIH1).